The chain runs to 235 residues: Elongation factor Tu, chloroplastic (235 aa).

A tr-type G domain is found at 1–125 (KNMITGAAQM…SVDSYIPTPI (125 aa)). 47–50 (NKED) is a binding site for GTP.

It belongs to the TRAFAC class translation factor GTPase superfamily. Classic translation factor GTPase family. EF-Tu/EF-1A subfamily.

It is found in the plastid. It localises to the chloroplast. It carries out the reaction GTP + H2O = GDP + phosphate + H(+). GTP hydrolase that promotes the GTP-dependent binding of aminoacyl-tRNA to the A-site of ribosomes during protein biosynthesis. The polypeptide is Elongation factor Tu, chloroplastic (tufA) (Costaria costata (Five-ribbed kelp)).